We begin with the raw amino-acid sequence, 91 residues long: Cell division topological specificity factor (91 aa).

It belongs to the MinE family.

Prevents the cell division inhibition by proteins MinC and MinD at internal division sites while permitting inhibition at polar sites. This ensures cell division at the proper site by restricting the formation of a division septum at the midpoint of the long axis of the cell. The protein is Cell division topological specificity factor of Thermoanaerobacter pseudethanolicus (strain ATCC 33223 / 39E) (Clostridium thermohydrosulfuricum).